Reading from the N-terminus, the 141-residue chain is Nucleoside diphosphate kinase (141 aa).

ATP is bound by residues K11, F59, R87, T93, R104, and N114. The Pros-phosphohistidine intermediate role is filled by H117.

The protein belongs to the NDK family. Homotetramer. Mg(2+) serves as cofactor.

It localises to the cytoplasm. It catalyses the reaction a 2'-deoxyribonucleoside 5'-diphosphate + ATP = a 2'-deoxyribonucleoside 5'-triphosphate + ADP. The enzyme catalyses a ribonucleoside 5'-diphosphate + ATP = a ribonucleoside 5'-triphosphate + ADP. Its function is as follows. Major role in the synthesis of nucleoside triphosphates other than ATP. The ATP gamma phosphate is transferred to the NDP beta phosphate via a ping-pong mechanism, using a phosphorylated active-site intermediate. The sequence is that of Nucleoside diphosphate kinase from Haemophilus influenzae (strain ATCC 51907 / DSM 11121 / KW20 / Rd).